We begin with the raw amino-acid sequence, 324 residues long: O-ureido-L-serine synthase (324 aa).

The residue at position 43 (lysine 43) is an N6-(pyridoxal phosphate)lysine. Pyridoxal 5'-phosphate is bound by residues asparagine 73, 177–181 (GTTGT), and serine 265.

This sequence belongs to the cysteine synthase/cystathionine beta-synthase family. In terms of assembly, homotetramer. Pyridoxal 5'-phosphate serves as cofactor.

It carries out the reaction hydroxyurea + O-acetyl-L-serine = O-ureido-L-serine + acetate + H(+). It catalyses the reaction O-acetyl-L-serine + hydrogen sulfide = L-cysteine + acetate. Functionally, involved in the biosynthesis of the antibiotic D-cycloserine (DCS), a cyclic structural analog of D-alanine, used as an antitubercular agent. Catalyzes the addition of hydroxyurea on O-acetyl-L-serine (OAS) to yield O-ureido-L-serine. It prefers sulfide as the second substrate, followed by hydroxyurea, L-homocysteine, and thiosulfate. This Streptomyces lavendulae protein is O-ureido-L-serine synthase.